Here is a 203-residue protein sequence, read N- to C-terminus: Superoxide dismutase [Mn] (203 aa).

Positions 31, 79, 161, and 165 each coordinate Mn(2+).

The protein belongs to the iron/manganese superoxide dismutase family. Requires Mn(2+) as cofactor.

It catalyses the reaction 2 superoxide + 2 H(+) = H2O2 + O2. Functionally, destroys superoxide anion radicals which are normally produced within the cells and which are toxic to biological systems. In Haloarcula marismortui (strain ATCC 43049 / DSM 3752 / JCM 8966 / VKM B-1809) (Halobacterium marismortui), this protein is Superoxide dismutase [Mn] (sod).